Reading from the N-terminus, the 1185-residue chain is AT-rich interactive domain-containing protein 5B (1185 aa).

Disordered regions lie at residues 248-281 (PNLK…ESKA), 413-550 (KGEE…PDED), 713-742 (ISKK…PIAI), 883-932 (HQQE…EGKG), and 1033-1058 (HLPK…LHGL). The span at 252–261 (GRPRKKKPCP) shows a compositional bias: basic residues. Residues 321–413 (RADEQAFLVA…LILPYERFIK (93 aa)) form the ARID domain. The segment covering 447–461 (IKNENQKSKKEKDNA) has biased composition (basic and acidic residues). Positions 462 to 471 (QKPQDASEVS) are enriched in polar residues. The span at 473-487 (EQEKDQESADQKNFT) shows a compositional bias: basic and acidic residues. Residues 1034 to 1053 (LPKETSVKEKVPDAEGEGSK) are compositionally biased toward basic and acidic residues.

This sequence belongs to the ARID5B family.

The protein localises to the nucleus. Functionally, transcription coactivator that binds to the 5'-AATA[CT]-3' core sequence and plays a key role in adipogenesis and liver development. Required for adipogenesis: regulates triglyceride metabolism in adipocytes by regulating expression of adipogenic genes. The sequence is that of AT-rich interactive domain-containing protein 5B (ARID5B) from Gallus gallus (Chicken).